We begin with the raw amino-acid sequence, 220 residues long: Octanoyltransferase (220 aa).

A BPL/LPL catalytic domain is found at 31-206 (DDTPDEVWLV…ELVTLLDYEQ (176 aa)). Residues 70–77 (RGGQVTYH), 137–139 (SLG), and 150–152 (GLA) each bind substrate. The active-site Acyl-thioester intermediate is the Cys-168.

This sequence belongs to the LipB family.

The protein localises to the cytoplasm. The enzyme catalyses octanoyl-[ACP] + L-lysyl-[protein] = N(6)-octanoyl-L-lysyl-[protein] + holo-[ACP] + H(+). Its pathway is protein modification; protein lipoylation via endogenous pathway; protein N(6)-(lipoyl)lysine from octanoyl-[acyl-carrier-protein]: step 1/2. In terms of biological role, catalyzes the transfer of endogenously produced octanoic acid from octanoyl-acyl-carrier-protein onto the lipoyl domains of lipoate-dependent enzymes. Lipoyl-ACP can also act as a substrate although octanoyl-ACP is likely to be the physiological substrate. This is Octanoyltransferase from Vibrio campbellii (strain ATCC BAA-1116).